The primary structure comprises 154 residues: Ribonuclease H (154 aa).

Residues 1–142 (MRKQIEIFTD…CDELAKQGAE (142 aa)) form the RNase H type-1 domain. Mg(2+) contacts are provided by Asp-10, Glu-48, Asp-70, and Asp-134.

The protein belongs to the RNase H family. In terms of assembly, monomer. Mg(2+) is required as a cofactor.

Its subcellular location is the cytoplasm. It carries out the reaction Endonucleolytic cleavage to 5'-phosphomonoester.. Its function is as follows. Endonuclease that specifically degrades the RNA of RNA-DNA hybrids. This is Ribonuclease H from Actinobacillus succinogenes (strain ATCC 55618 / DSM 22257 / CCUG 43843 / 130Z).